A 103-amino-acid polypeptide reads, in one-letter code: Putative glutaredoxin-C14 (103 aa).

The Glutaredoxin domain occupies 1 to 102; that stretch reads MDRVMKLASE…PMLKNAGALW (102 aa). A disulfide bridge connects residues cysteine 21 and cysteine 24. A Responsive for interaction with TGA factors motif is present at residues 100–103; that stretch reads ALWL.

The protein belongs to the glutaredoxin family. CC-type subfamily.

Its subcellular location is the cytoplasm. The protein resides in the nucleus. Functionally, has a glutathione-disulfide oxidoreductase activity in the presence of NADPH and glutathione reductase. Reduces low molecular weight disulfides and proteins. The polypeptide is Putative glutaredoxin-C14 (GRXC14) (Oryza sativa subsp. japonica (Rice)).